Here is a 439-residue protein sequence, read N- to C-terminus: FAD-linked oxidoreductase phmC (439 aa).

The first 19 residues, 1–19 (MLSSILLTIFCAFLSSTGA), serve as a signal peptide directing secretion. Asparagine 29 and asparagine 84 each carry an N-linked (GlcNAc...) asparagine glycan. Residues 89 to 272 (QGSVPSYYIQ…LSTTTRVEPK (184 aa)) form the FAD-binding PCMH-type domain. Residues asparagine 285 and asparagine 300 are each glycosylated (N-linked (GlcNAc...) asparagine).

Belongs to the oxygen-dependent FAD-linked oxidoreductase family. It depends on FAD as a cofactor.

Its pathway is mycotoxin biosynthesis. Functionally, FAD-linked oxidoreductase; part of the gene cluster that mediates the biosynthesis of the mycotoxins phomacins, leucine-derived cytochalasans with potent actin polymerization-inhibitory activities and monocot-specific antigerminative activities. The first step in the pathway is catalyzed by the hybrid PKS-NRPS phmA, assisted by the enoyl reductase phmE, that are responsible for fusion of the leucine precursor and the polyketide backbone to produce a 2-pyrrolidone intermediate. The polyketide synthase module (PKS) of phmA is responsible for the synthesis of the polyketide backbone and the downstream nonribosomal peptide synthetase (NRPS) amidates the carboxyl end of the polyketide with the leucine precursor. Because phmA lacks a designated enoylreductase (ER) domain, the required activity is provided the enoyl reductase phmE. Reduction by the hydrolyase phmG, followed by dehydration and intra-molecular Diels-Alder cyclization by the Diels-Alderase phmD then yield the required isoindolone-fused macrocycle. A number of oxidative steps catalyzed by the tailoring cytochrome P450 monooxygenase phmB, the FAD-linked oxidoreductase phmC and the short-chain dehydrogenase/reductase phmF, are further required to afford the final products, phomacin D and phomacin E. This is FAD-linked oxidoreductase phmC from Phaeosphaeria nodorum (strain SN15 / ATCC MYA-4574 / FGSC 10173) (Glume blotch fungus).